Consider the following 72-residue polypeptide: Variant surface glycoprotein MITAT 1.1000BC (72 aa).

The GPI-anchor amidated aspartate moiety is linked to residue Asp50. A propeptide spans 51–72 (removed in mature form); the sequence is GSFLVNKKFALMVYDFVSLLAF.

It localises to the cell membrane. VSG forms a coat on the surface of the parasite. The trypanosome evades the immune response of the host by expressing a series of antigenically distinct VSGs from an estimated 1000 VSG genes. The polypeptide is Variant surface glycoprotein MITAT 1.1000BC (Trypanosoma brucei brucei).